An 886-amino-acid chain; its full sequence is Kinesin-like protein KIF18A (886 aa).

One can recognise a Kinesin motor domain in the interval 11–355; it reads RMKVVVRVRP…LKYANRAKEI (345 aa). A Glycyl lysine isopeptide (Lys-Gly) (interchain with G-Cter in SUMO2) cross-link involves residue Lys24. An ATP-binding site is contributed by 113-120; sequence GATGSGKT. Residues 370 to 404 are a coiled coil; sequence ISQYVKICNMQKAEILMLKEKLKAYEEQKALSDRN. The residue at position 674 (Ser674) is a Phosphoserine. Residue Lys683 forms a Glycyl lysine isopeptide (Lys-Gly) (interchain with G-Cter in SUMO2) linkage. Ser695 bears the Phosphoserine mark. Positions 774–804 are disordered; sequence EQEPLASSKSSVHRIESSSFSTKDSMPESAG. A Glycyl lysine isopeptide (Lys-Gly) (interchain with G-Cter in SUMO2) cross-link involves residue Lys782. Ser826 is modified (phosphoserine). Lys862 is covalently cross-linked (Glycyl lysine isopeptide (Lys-Gly) (interchain with G-Cter in SUMO2)). The tract at residues 862–886 is disordered; it reads KRNTNKTNSNMLRKFRRNTSKENVQ.

Belongs to the TRAFAC class myosin-kinesin ATPase superfamily. Kinesin family. Interacts with CENPE and ESR1. Glycosylated. Post-translationally, ubiquitinated.

Its subcellular location is the cell projection. It is found in the ruffle. The protein localises to the cytoplasm. The protein resides in the nucleus. It localises to the cytoskeleton. Its subcellular location is the microtubule organizing center. It is found in the centrosome. Functionally, microtubule-depolymerizing kinesin which plays a role in chromosome congression by reducing the amplitude of preanaphase oscillations and slowing poleward movement during anaphase, thus suppressing chromosome movements. May stabilize the CENPE-BUB1B complex at the kinetochores during early mitosis and maintains CENPE levels at kinetochores during chromosome congression. In Mus musculus (Mouse), this protein is Kinesin-like protein KIF18A (Kif18a).